Consider the following 252-residue polypeptide: ATP synthase subunit a, chloroplastic (252 aa).

5 helical membrane passes run 41–61 (GQVL…TLLA), 100–120 (VPFL…GALL), 138–158 (DINT…YAGI), 204–224 (LIVG…LMLL), and 225–245 (GVFT…AYIG).

It belongs to the ATPase A chain family. In terms of assembly, F-type ATPases have 2 components, CF(1) - the catalytic core - and CF(0) - the membrane proton channel. CF(1) has five subunits: alpha(3), beta(3), gamma(1), delta(1), epsilon(1). CF(0) has four main subunits: a, b, b' and c.

It is found in the plastid. Its subcellular location is the chloroplast thylakoid membrane. Functionally, key component of the proton channel; it plays a direct role in the translocation of protons across the membrane. This is ATP synthase subunit a, chloroplastic from Oedogonium cardiacum (Filamentous green alga).